The primary structure comprises 339 residues: Glycerol-3-phosphate dehydrogenase [NAD(P)+] (339 aa).

Positions 15, 16, 36, and 110 each coordinate NADPH. Positions 110, 139, and 141 each coordinate sn-glycerol 3-phosphate. Ala-143 contributes to the NADPH binding site. Lys-195, Asp-248, Ser-258, Arg-259, and Asn-260 together coordinate sn-glycerol 3-phosphate. Lys-195 serves as the catalytic Proton acceptor. Residue Arg-259 participates in NADPH binding. Val-283 and Glu-285 together coordinate NADPH.

It belongs to the NAD-dependent glycerol-3-phosphate dehydrogenase family.

The protein resides in the cytoplasm. It catalyses the reaction sn-glycerol 3-phosphate + NAD(+) = dihydroxyacetone phosphate + NADH + H(+). It carries out the reaction sn-glycerol 3-phosphate + NADP(+) = dihydroxyacetone phosphate + NADPH + H(+). It functions in the pathway membrane lipid metabolism; glycerophospholipid metabolism. Its function is as follows. Catalyzes the reduction of the glycolytic intermediate dihydroxyacetone phosphate (DHAP) to sn-glycerol 3-phosphate (G3P), the key precursor for phospholipid synthesis. This Shigella boydii serotype 18 (strain CDC 3083-94 / BS512) protein is Glycerol-3-phosphate dehydrogenase [NAD(P)+].